A 409-amino-acid chain; its full sequence is Arginine biosynthesis bifunctional protein ArgJ (409 aa).

Substrate contacts are provided by Thr-165, Lys-191, Thr-202, Glu-282, Asn-404, and Thr-409. Thr-202 serves as the catalytic Nucleophile.

This sequence belongs to the ArgJ family. As to quaternary structure, heterotetramer of two alpha and two beta chains.

The protein localises to the cytoplasm. It catalyses the reaction N(2)-acetyl-L-ornithine + L-glutamate = N-acetyl-L-glutamate + L-ornithine. The enzyme catalyses L-glutamate + acetyl-CoA = N-acetyl-L-glutamate + CoA + H(+). It functions in the pathway amino-acid biosynthesis; L-arginine biosynthesis; L-ornithine and N-acetyl-L-glutamate from L-glutamate and N(2)-acetyl-L-ornithine (cyclic): step 1/1. Its pathway is amino-acid biosynthesis; L-arginine biosynthesis; N(2)-acetyl-L-ornithine from L-glutamate: step 1/4. In terms of biological role, catalyzes two activities which are involved in the cyclic version of arginine biosynthesis: the synthesis of N-acetylglutamate from glutamate and acetyl-CoA as the acetyl donor, and of ornithine by transacetylation between N(2)-acetylornithine and glutamate. The protein is Arginine biosynthesis bifunctional protein ArgJ of Parasynechococcus marenigrum (strain WH8102).